Reading from the N-terminus, the 551-residue chain is Probable NADH-ubiquinone oxidoreductase C3A11.07, mitochondrial (551 aa).

The transit peptide at 1–37 directs the protein to the mitochondrion; it reads MLFSRSILRGMPKAGIPKSPLALSASRNLRLANSVRF. FAD is bound at residue 93 to 123; that stretch reads TLVVLGAGWGATSILRTIDTSLFNVIVVSPR. Residue 255-291 coordinates NAD(+); that stretch reads VHTVVVGGGPTGMEFAGEMADFIEDDLKSWYPELADD.

Belongs to the NADH dehydrogenase family.

It localises to the mitochondrion. The enzyme catalyses a quinone + NADH + H(+) = a quinol + NAD(+). The catalysed reaction is a ubiquinone + NADH + H(+) = a ubiquinol + NAD(+). Catalyzes the oxidation of NADH. This Schizosaccharomyces pombe (strain 972 / ATCC 24843) (Fission yeast) protein is Probable NADH-ubiquinone oxidoreductase C3A11.07, mitochondrial.